The primary structure comprises 337 residues: Adenylosuccinate synthetase (337 aa).

Residues 12–18 (GDEGKGK) and 42–44 (GHT) each bind GTP. Asp13 serves as the catalytic Proton acceptor. The Mg(2+) site is built by Asp13 and Gly42. IMP contacts are provided by residues 13 to 16 (DEGK), 40 to 43 (NAGH), Thr124, Arg138, Gln176, Thr191, and Arg253. Catalysis depends on His43, which acts as the Proton donor. Residue 249-255 (TVTGRRR) participates in substrate binding. GTP is bound by residues Arg255, 281–283 (GVD), and 321–323 (STG).

This sequence belongs to the adenylosuccinate synthetase family. Homodimer. Mg(2+) serves as cofactor.

It is found in the cytoplasm. The catalysed reaction is IMP + L-aspartate + GTP = N(6)-(1,2-dicarboxyethyl)-AMP + GDP + phosphate + 2 H(+). It functions in the pathway purine metabolism; AMP biosynthesis via de novo pathway; AMP from IMP: step 1/2. Plays an important role in the de novo pathway of purine nucleotide biosynthesis. Catalyzes the first committed step in the biosynthesis of AMP from IMP. The polypeptide is Adenylosuccinate synthetase (Archaeoglobus fulgidus (strain ATCC 49558 / DSM 4304 / JCM 9628 / NBRC 100126 / VC-16)).